Reading from the N-terminus, the 388-residue chain is Paired box protein Pax-5 (388 aa).

The segment at residues 15–141 (RHGGVNQLGG…SSINRIIRTK (127 aa)) is a DNA-binding region (paired). The PAI subdomain stretch occupies residues 18-74 (GVNQLGGVFVNGRPLPDVVRQRIVELAHQGVRPCDISRQLRVSHGCVSKILGRYYET). Residues 93–141 (KVVDKIADYKRQNPTMFAWEIRDRLLAERVCDNDTVPSVSSINRIIRTK) are RED subdomain. The span at 143-158 (QQPTNQQIPPSNHSIA) shows a compositional bias: polar residues. 2 disordered regions span residues 143–162 (QQPT…STGS) and 191–217 (AETN…PGRD).

As to expression, first detected in mid-neurula embryos in the folding neural tube. With the completion of neurulation, expression becomes localized to the midbrain/hindbrain boundary (MHB) till at least stage 40. Expression is absent from regions adjacent to the MHB. In tailbuds, weakly and transiently expressed in the developing otic vesicle from stage 21 to stage 27.

It is found in the nucleus. Functionally, probable transcription factor. The polypeptide is Paired box protein Pax-5 (Xenopus laevis (African clawed frog)).